The sequence spans 270 residues: MAKKTVEGEHGTPKTNFTKKETSKNHDDFKKIIGHKVVEEHYVEYEVELTSGKTITATEFDFKGDDSLLSTYKKKVTKQSDDSSGEYAVERVLAHRKVKGSPLYLVQWKGYPHPVWNSEMWEEDLDNCKDLLAAYKKHQEDLKIAQTPKKTPSKTPKKTPKSLKRRALTPSDDEEEAGPIAPEPKKTPKQSTKKLKRTTSPETNLVEKSKKKAIPDLENHTLDQEKNDVIERVEEIQEDEDDDDEQREEVVTTAPVETKSRWGFGSWKWF.

Disordered regions lie at residues 1 to 24 (MAKK…ETSK) and 143 to 229 (KIAQ…KNDV). The region spanning 87–147 (YAVERVLAHR…HQEDLKIAQT (61 aa)) is the Chromo domain. 2 stretches are compositionally biased toward basic residues: residues 151–167 (TPSK…KRRA) and 187–197 (TPKQSTKKLKR). Positions 205 to 229 (LVEKSKKKAIPDLENHTLDQEKNDV) are enriched in basic and acidic residues.

In terms of assembly, interacts with mono-, di- and tri-methylated 'Lys-9' residues on histone H3. Weakly interacts with methylated 'Lys-37' residues on histone H3.

The protein localises to the nucleus inner membrane. Its subcellular location is the membrane. Its function is as follows. Chromatin anchor protein which binds to methylated lysine residues on histone H3, thereby recruiting heterochromatin to the nuclear periphery, especially in embryonic cells, with a lesser role in differentiated cells. May be required for the correct positioning of chromatin and nucleoli in embryos. This Caenorhabditis elegans protein is Chromo domain-containing protein cec-4.